The primary structure comprises 528 residues: Na(+)/H(+) antiporter NhaB (528 aa).

The next 10 helical transmembrane spans lie at 20-39, 66-86, 97-117, 139-159, 241-261, 304-324, 349-369, 390-410, 448-468, and 476-496; these read WFKI…FYFN, PGGL…SQVL, LLLV…LFVF, AFLS…TVAV, IRMS…CFLV, AVIG…VGLI, EEAL…AVII, LVIF…VFVG, ATPN…APLI, and VWMA…AIQL.

This sequence belongs to the NhaB Na(+)/H(+) (TC 2.A.34) antiporter family.

Its subcellular location is the cell inner membrane. The enzyme catalyses 2 Na(+)(in) + 3 H(+)(out) = 2 Na(+)(out) + 3 H(+)(in). Its function is as follows. Na(+)/H(+) antiporter that extrudes sodium in exchange for external protons. The chain is Na(+)/H(+) antiporter NhaB from Shewanella pealeana (strain ATCC 700345 / ANG-SQ1).